A 148-amino-acid chain; its full sequence is Augurin (148 aa).

The first 31 residues, 1-31 (MGTSSARPAVLALAGLALLLLLCLGPGDVSG), serve as a signal peptide directing secretion. 2 propeptides span residues 32–68 (NKLK…LKRA) and 133–148 (SREG…YDDY).

Belongs to the augurin family. Expressed in the brain, with expression in the choroid plexus and the ventricular ependymal cells (at protein level).

The protein resides in the secreted. The protein localises to the cytoplasm. It is found in the apical cell membrane. Its function is as follows. Probable hormone that may attenuate cell proliferation and induce senescence of oligodendrocyte and neural precursor cells in the central nervous system. ECRG4-induced senescence is characterized by G1 arrest, RB1 dephosphorylation and accelerated CCND1 and CCND3 proteasomal degradation. The protein is Augurin of Rattus norvegicus (Rat).